The following is a 104-amino-acid chain: MIQKAFKMKLFEGKEEEYKKRHNEIWPDLVKELKSHGTSKYLIFYDKDTNILFSYIEMENEELWDEIAETDACKKWWAFMKDIMETNPDNSPISVELSNVFNLK.

Residue tyrosine 18 participates in substrate binding. The Proton donor role is filled by histidine 22. Substrate-binding positions include tyrosine 41 and 76–77 (WW).

Belongs to the rhamnose mutarotase family. As to quaternary structure, homodimer.

It localises to the cytoplasm. It catalyses the reaction alpha-L-rhamnose = beta-L-rhamnose. Its pathway is carbohydrate metabolism; L-rhamnose metabolism. Involved in the anomeric conversion of L-rhamnose. In Clostridium beijerinckii (strain ATCC 51743 / NCIMB 8052) (Clostridium acetobutylicum), this protein is L-rhamnose mutarotase.